The primary structure comprises 485 residues: Cobyric acid synthase (485 aa).

Residues 250-436 (RVLVACPILP…VHGLLANADL (187 aa)) enclose the GATase cobBQ-type domain. C332 functions as the Nucleophile in the catalytic mechanism. The active site involves H428.

Belongs to the CobB/CobQ family. CobQ subfamily.

It functions in the pathway cofactor biosynthesis; adenosylcobalamin biosynthesis. Catalyzes amidations at positions B, D, E, and G on adenosylcobyrinic A,C-diamide. NH(2) groups are provided by glutamine, and one molecule of ATP is hydrogenolyzed for each amidation. This chain is Cobyric acid synthase, found in Rhizorhabdus wittichii (strain DSM 6014 / CCUG 31198 / JCM 15750 / NBRC 105917 / EY 4224 / RW1) (Sphingomonas wittichii).